The following is a 163-amino-acid chain: 3-dehydroquinate dehydratase (163 aa).

Catalysis depends on tyrosine 28, which acts as the Proton acceptor. Residues asparagine 80, histidine 86, and aspartate 93 each contribute to the substrate site. The Proton donor role is filled by histidine 106. Substrate contacts are provided by residues isoleucine 107–serine 108 and arginine 117.

It belongs to the type-II 3-dehydroquinase family. In terms of assembly, homododecamer.

It carries out the reaction 3-dehydroquinate = 3-dehydroshikimate + H2O. It functions in the pathway metabolic intermediate biosynthesis; chorismate biosynthesis; chorismate from D-erythrose 4-phosphate and phosphoenolpyruvate: step 3/7. Catalyzes a trans-dehydration via an enolate intermediate. This is 3-dehydroquinate dehydratase from Bradyrhizobium sp. (strain BTAi1 / ATCC BAA-1182).